The primary structure comprises 388 residues: MNLHEYQAKSLFAEYGLPVSEGFACDTAQEAVEAAGHIGGNLWVVKCQVHAGGRGKAGGVKVTGNKDEIRAFAENWLGKNLVTYQTDAKGQPVAKILVESCTDIANELYLGAVVDRSTRRVVFMASTEGGVDIETVAEHTPELIHTAIIDPLTGPQAFQARDLGFKLGLNPTQMKQFTKIFMGLANMFNDHDFALLEINPLVITTEGNLHCLDGKIGIDGNALFRQPKIKAMHDPSQDDAREAHAAKFELNYVALDGNVGCMVNGAGLAMGTMDIVNLHGGKPANFLDVGGGATKERVAEAFKIILSDSNVKAVLVNIFGGIVRCDMIAEGIIGAVKEVGVKVPVVVRLEGTNAELGREVLAKSGLDIIAATSLTDAAEQVVKAAEGK.

An ATP-grasp domain is found at 9-244 (KSLFAEYGLP…PSQDDAREAH (236 aa)). Residues Lys-46, 53-55 (GRG), Glu-99, Thr-102, and Glu-107 each bind ATP. Positions 199 and 213 each coordinate Mg(2+). Substrate is bound by residues Asn-264 and 321–323 (GIV).

Belongs to the succinate/malate CoA ligase beta subunit family. Heterotetramer of two alpha and two beta subunits. It depends on Mg(2+) as a cofactor.

The catalysed reaction is succinate + ATP + CoA = succinyl-CoA + ADP + phosphate. It carries out the reaction GTP + succinate + CoA = succinyl-CoA + GDP + phosphate. It participates in carbohydrate metabolism; tricarboxylic acid cycle; succinate from succinyl-CoA (ligase route): step 1/1. Its function is as follows. Succinyl-CoA synthetase functions in the citric acid cycle (TCA), coupling the hydrolysis of succinyl-CoA to the synthesis of either ATP or GTP and thus represents the only step of substrate-level phosphorylation in the TCA. The beta subunit provides nucleotide specificity of the enzyme and binds the substrate succinate, while the binding sites for coenzyme A and phosphate are found in the alpha subunit. This is Succinate--CoA ligase [ADP-forming] subunit beta from Shewanella frigidimarina (strain NCIMB 400).